An 881-amino-acid chain; its full sequence is Alanine--tRNA ligase (881 aa).

The Zn(2+) site is built by His566, His570, Cys668, and His672.

The protein belongs to the class-II aminoacyl-tRNA synthetase family. Requires Zn(2+) as cofactor.

It is found in the cytoplasm. It carries out the reaction tRNA(Ala) + L-alanine + ATP = L-alanyl-tRNA(Ala) + AMP + diphosphate. Its function is as follows. Catalyzes the attachment of alanine to tRNA(Ala) in a two-step reaction: alanine is first activated by ATP to form Ala-AMP and then transferred to the acceptor end of tRNA(Ala). Also edits incorrectly charged Ser-tRNA(Ala) and Gly-tRNA(Ala) via its editing domain. The polypeptide is Alanine--tRNA ligase (Frankia alni (strain DSM 45986 / CECT 9034 / ACN14a)).